Here is a 406-residue protein sequence, read N- to C-terminus: Argininosuccinate synthase (406 aa).

8 to 16 (AYSGGLDTS) contacts ATP. Y86 contributes to the L-citrulline binding site. G116 provides a ligand contact to ATP. L-aspartate is bound by residues T118, N122, and D123. L-citrulline is bound at residue N122. 4 residues coordinate L-citrulline: R126, S174, E259, and Y271.

This sequence belongs to the argininosuccinate synthase family. Type 1 subfamily. Homotetramer.

The protein localises to the cytoplasm. The catalysed reaction is L-citrulline + L-aspartate + ATP = 2-(N(omega)-L-arginino)succinate + AMP + diphosphate + H(+). Its pathway is amino-acid biosynthesis; L-arginine biosynthesis; L-arginine from L-ornithine and carbamoyl phosphate: step 2/3. This is Argininosuccinate synthase from Lacticaseibacillus paracasei (strain ATCC 334 / BCRC 17002 / CCUG 31169 / CIP 107868 / KCTC 3260 / NRRL B-441) (Lactobacillus paracasei).